Here is a 78-residue protein sequence, read N- to C-terminus: Large ribosomal subunit protein bL28 (78 aa).

Residues 1–26 are disordered; that stretch reads MSAYCQVTGRKPSFGKSVSHSHRRTN.

Belongs to the bacterial ribosomal protein bL28 family.

This is Large ribosomal subunit protein bL28 from Corynebacterium jeikeium (strain K411).